The primary structure comprises 206 residues: Dephospho-CoA kinase (206 aa).

The region spanning 4-200 (IVALTGGIGS…AHYLQLASQF (197 aa)) is the DPCK domain. 12-17 (GSGKST) serves as a coordination point for ATP.

It belongs to the CoaE family.

The protein resides in the cytoplasm. The catalysed reaction is 3'-dephospho-CoA + ATP = ADP + CoA + H(+). Its pathway is cofactor biosynthesis; coenzyme A biosynthesis; CoA from (R)-pantothenate: step 5/5. Functionally, catalyzes the phosphorylation of the 3'-hydroxyl group of dephosphocoenzyme A to form coenzyme A. The protein is Dephospho-CoA kinase of Shigella boydii serotype 4 (strain Sb227).